The sequence spans 155 residues: Small ribosomal subunit protein uS7cz/uS7cy (155 aa).

The protein belongs to the universal ribosomal protein uS7 family. As to quaternary structure, part of the 30S ribosomal subunit.

It is found in the plastid. Its function is as follows. One of the primary rRNA binding proteins, it binds directly to 16S rRNA where it nucleates assembly of the head domain of the 30S subunit. This Cuscuta exaltata (Tall dodder) protein is Small ribosomal subunit protein uS7cz/uS7cy (rps7-A).